The sequence spans 333 residues: UDP-N-acetylglucosamine 4,6-dehydratase (inverting) (333 aa).

NADP(+) contacts are provided by residues 19-22 (TGSF), 43-48 (SRDELK), 67-68 (DV), Ala-87, Lys-91, and 129-130 (LS). Residue Lys-91 participates in substrate binding. Lys-133 is a catalytic residue. NADP(+) is bound by residues Tyr-141 and Lys-145. Asn-173 contributes to the substrate binding site. 174–178 (VVGSR) provides a ligand contact to NADP(+). The substrate site is built by Val-181, Thr-199, Arg-258, and Glu-261.

The protein belongs to the polysaccharide synthase family. In terms of assembly, homohexamer. The cofactor is NADP(+).

It catalyses the reaction UDP-N-acetyl-alpha-D-glucosamine = UDP-2-acetamido-2,6-dideoxy-beta-L-arabino-hex-4-ulose + H2O. Functionally, catalyzes the first step in the biosynthesis of pseudaminic acid, a sialic-acid-like sugar that is used to modify flagellin. Has both C6 dehydratase and C5 epimerase activities that result in the production of both UDP-2-acetamido-2,6-dideoxy-beta-L-arabino-4-hexulose and UDP-2-acetamido-2,6-dideoxy-alpha-D-xylo-4-hexulose. This is UDP-N-acetylglucosamine 4,6-dehydratase (inverting) (pseB) from Helicobacter pylori (strain ATCC 700392 / 26695) (Campylobacter pylori).